The chain runs to 690 residues: MLRGQEERKYSIRKYSIGVVSVLAATMFVVSSHEAQASEKTSTNAAAQKETLNQPGEQGNAITSHQMQSGKQLDDMHKENGKSGTVTEGKDTLQSSKHQSTQNSKTIRTQNDNQVKQDSERQGSKQSHQNNATNNTERQNDQVQNTHHAERNGSQSTTSQSNDVDKSQPSIPAQKVIPNHDKAAPTSTTPPSNDKTAPKSTKAQDATTDKHPNQQDTHQPAHQIIDAKQDDTVRQSEQKPQVGDLSKHIDGQNSPEKPTDKNTDNKQLIKDALQAPKTRSTTNAAADAKKVRPLKANQVQPLNKYPVVFVHGFLGLVGDNAPALYPNYWGGNKFKVIEELRKQGYNVHQASVSAFGSNYDRAVELYYYIKGGRVDYGAAHAAKYGHERYGKTYKGIMPNWEPGKKVHLVGHSMGGQTIRLMEEFLRNGNKEEIAYHKAHGGEISPLFTGGHNNMVASITTLATPHNGSQAADKFGNTEAVRKIMFALNRFMGNKYSNIDLGLTQWGFKQLPNESYIDYIKRVSKSKIWTSDDNAAYDLTLDGSAKLNNMTSMNPNITYTTYTGVSSHTGPLGYENPDLGTFFLMATTSRIIGHDAREEWRKNDGVVPVISSLHPSNQPFVNVTNDEPATRRGIWQVKPIIQGWDHVDFIGVDFLDFKRKGAELANFYTGIINDLLRVEATESKGTQLKAS.

A signal peptide spans 1–37 (MLRGQEERKYSIRKYSIGVVSVLAATMFVVSSHEAQA). The segment covering 52–71 (LNQPGEQGNAITSHQMQSGK) has biased composition (polar residues). The disordered stretch occupies residues 52-266 (LNQPGEQGNA…KPTDKNTDNK (215 aa)). Residues 72–81 (QLDDMHKENG) show a composition bias toward basic and acidic residues. 3 stretches are compositionally biased toward polar residues: residues 82 to 114 (KSGT…NDNQ), 124 to 171 (SKQS…QPSI), and 185 to 206 (PTST…AQDA). Composition is skewed to basic and acidic residues over residues 225-237 (IDAK…RQSE) and 257-266 (KPTDKNTDNK). Active-site charge relay system residues include serine 412 and histidine 645.

Belongs to the AB hydrolase superfamily. Lipase family.

Its subcellular location is the secreted. It carries out the reaction a triacylglycerol + H2O = a diacylglycerol + a fatty acid + H(+). This is Lipase 2 (lip2) from Staphylococcus aureus (strain NCTC 8325 / PS 47).